The sequence spans 867 residues: Leucine--tRNA ligase (867 aa).

A 'HIGH' region motif is present at residues 42–52 (PYPSGNLHMGH). The short motif at 625–629 (KMSKS) is the 'KMSKS' region element. K628 contributes to the ATP binding site.

This sequence belongs to the class-I aminoacyl-tRNA synthetase family.

The protein localises to the cytoplasm. It catalyses the reaction tRNA(Leu) + L-leucine + ATP = L-leucyl-tRNA(Leu) + AMP + diphosphate. The polypeptide is Leucine--tRNA ligase (Blochmanniella floridana).